Reading from the N-terminus, the 171-residue chain is dCTP pyrophosphatase (171 aa).

It catalyses the reaction dCTP + H2O = dCMP + diphosphate + H(+). The sequence is that of dCTP pyrophosphatase (56) from Enterobacteria phage T4 (Bacteriophage T4).